Here is a 256-residue protein sequence, read N- to C-terminus: L-tyrosine degradation gene cluster protein hmgX (256 aa).

The protein belongs to the TTC36 family.

Its subcellular location is the cytoplasm. Its function is as follows. Part of the L-tyrosine degradation gene cluster that mediates the biosynthesis of the brownish pigment pyomelanin as an alternative melanin. The 4-hydroxyphenylpyruvate dioxygenase hppD catalyzes the conversion of 4-hydroxyphenylpyruvate to homogentisic acid (HGA). The protein hmgX is crucial for this conversion and thus, probably functions as an accessory factor to mediate specific activity of hppD. The homogentisate 1,2-dioxygenase hmgA is then involved in the cleavage of the aromatic ring of HGA and its conversion to 4-maleylacetoacetate. When hmgA activity is lowered by the cell wall integrity (CWI) signaling pathway, HGA accumulates and leads to the production of pyomelanin through benzoquinone acetic acid after oxidation and polymerization. On the opposite, in non-stress conditions, both hppD and hmgA activities are balanced and HGA is degraded into 4-maleylacetoacetate. 4-maleylacetoacetate is further converted to 4-fumarylacetoacetate by the maleylacetoacetate isomerase maiA, which is degraded into fumarate and acetoacetate by the fumarylacetoacetase fahA. This Aspergillus fumigatus (strain ATCC MYA-4609 / CBS 101355 / FGSC A1100 / Af293) (Neosartorya fumigata) protein is L-tyrosine degradation gene cluster protein hmgX.